The sequence spans 448 residues: Ribonuclease J (448 aa).

6 residues coordinate Zn(2+): H81, H83, D85, H86, H151, and D173. 383–387 (HVSGH) contributes to the substrate binding site. H409 provides a ligand contact to Zn(2+).

It belongs to the metallo-beta-lactamase superfamily. RNA-metabolizing metallo-beta-lactamase-like family. Archaeal RNase J subfamily. In terms of assembly, forms homodimers on heating to 60 degrees Celsius which may be the active form. Requires Zn(2+) as cofactor.

It localises to the cytoplasm. Inhibited by imidazole. In terms of biological role, a 5'-3' exoribonuclease with a strong reference for 5'-monophosphorylated RNA and no endoribonuclease activty. Also has robust 5'-'3 nuclease activity on single-stranded DNA (exodeoxyribonuclease, exoDNase). May be involved in RNA degradation. This chain is Ribonuclease J, found in Methanocaldococcus jannaschii (strain ATCC 43067 / DSM 2661 / JAL-1 / JCM 10045 / NBRC 100440) (Methanococcus jannaschii).